The chain runs to 226 residues: Cytidylate kinase (226 aa).

12 to 20 (GPSGAGKGT) is a binding site for ATP.

The protein belongs to the cytidylate kinase family. Type 1 subfamily.

It localises to the cytoplasm. It catalyses the reaction CMP + ATP = CDP + ADP. The enzyme catalyses dCMP + ATP = dCDP + ADP. The protein is Cytidylate kinase of Vibrio vulnificus (strain YJ016).